A 528-amino-acid chain; its full sequence is 4-chlorobenzoate--CoA ligase (528 aa).

ATP-binding positions include T161–K169, N300–T305, and N409.

Belongs to the ATP-dependent AMP-binding enzyme family. In terms of assembly, homodimer. Mg(2+) is required as a cofactor.

The catalysed reaction is 4-chlorobenzoate + ATP + CoA = 4-chlorobenzoyl-CoA + AMP + diphosphate. The protein operates within xenobiotic degradation; 4-chlorobenzoate degradation; 4-hydroxybenzoate from 4-chlorobenzoate: step 2/3. Unaffected by 5,5'-dithiobis-(2-nitrobenzoic acid), 4-chloromercuribenzoate and sodium azide. Inhibited by Cu(2+), Fe(2+) and Zn(2+). Unaffected by Na(+), K(+) and Li(+). Its function is as follows. Catalyzes the formation of chlorobenzoyl-CoA via a 2 step reaction. First 4-chlorobenzoyl is adenylated by ATP, followed by acyl transfer from the 4-chlorobenzoyl-AMP intermediate to CoA. Benzoate, 4-bromobenzoate, 4-iodobenzoate and 4-methylbenzoate also act as substrates. Inactive towards 4-aminobenzoate, 4-hydroxybenzoate, 2-aminobenzoate, 2,3-dihydroxybenzoate, 4-coumarate and the aliphatic carboxylic acids palmate, caproate, laurate and butyrate. Negligible activity is detected when ATP is replaced by UTP, CTP or GTP as cosubstrate. This Pseudomonas sp. (strain CBS-3) protein is 4-chlorobenzoate--CoA ligase.